We begin with the raw amino-acid sequence, 189 residues long: Small ribosomal subunit protein uS5 (189 aa).

Positions 22 to 85 (LIDKLVTINR…ERAKRGMIRV (64 aa)) constitute an S5 DRBM domain. The disordered stretch occupies residues 164–189 (SVASRRGKKVADLFGPKREKEAPADV). Over residues 172–189 (KVADLFGPKREKEAPADV) the composition is skewed to basic and acidic residues.

This sequence belongs to the universal ribosomal protein uS5 family. Part of the 30S ribosomal subunit. Contacts proteins S4 and S8.

With S4 and S12 plays an important role in translational accuracy. Functionally, located at the back of the 30S subunit body where it stabilizes the conformation of the head with respect to the body. The sequence is that of Small ribosomal subunit protein uS5 from Acidiphilium cryptum (strain JF-5).